The primary structure comprises 332 residues: tRNA(Ile)-lysidine synthase (332 aa).

39–44 is a binding site for ATP; that stretch reads SGGADS.

It belongs to the tRNA(Ile)-lysidine synthase family.

The protein resides in the cytoplasm. The enzyme catalyses cytidine(34) in tRNA(Ile2) + L-lysine + ATP = lysidine(34) in tRNA(Ile2) + AMP + diphosphate + H(+). In terms of biological role, ligates lysine onto the cytidine present at position 34 of the AUA codon-specific tRNA(Ile) that contains the anticodon CAU, in an ATP-dependent manner. Cytidine is converted to lysidine, thus changing the amino acid specificity of the tRNA from methionine to isoleucine. This is tRNA(Ile)-lysidine synthase from Leifsonia xyli subsp. xyli (strain CTCB07).